A 433-amino-acid chain; its full sequence is NADH-ubiquinone oxidoreductase chain 4 (433 aa).

Transmembrane regions (helical) follow at residues 10–30 (LFFL…TLFL), 45–65 (FFFF…ISIL), 80–100 (IFNF…MLEN), 101–121 (LLMF…MISG), 132–152 (GFYM…LMLL), 169–189 (MGFI…MFLF), 203–223 (AGSM…LYRF), 234–254 (FSFV…IFCL), 261–281 (SLIA…CVTF), 286–306 (SFGM…LFCL), 331–353 (LSMW…NLFG), 366–386 (LLLS…SMFM), and 410–430 (YLML…NFFM).

The protein belongs to the complex I subunit 4 family.

It is found in the mitochondrion membrane. It catalyses the reaction a ubiquinone + NADH + 5 H(+)(in) = a ubiquinol + NAD(+) + 4 H(+)(out). Its function is as follows. Core subunit of the mitochondrial membrane respiratory chain NADH dehydrogenase (Complex I) that is believed to belong to the minimal assembly required for catalysis. Complex I functions in the transfer of electrons from NADH to the respiratory chain. The immediate electron acceptor for the enzyme is believed to be ubiquinone. This is NADH-ubiquinone oxidoreductase chain 4 (ND4) from Rhipicephalus sanguineus (Brown dog tick).